Reading from the N-terminus, the 355-residue chain is Guanine nucleotide-binding protein G(i) subunit alpha-2 (355 aa).

Gly2 carries the N-myristoyl glycine lipid modification. Cys3 carries the S-palmitoyl cysteine lipid modification. Residues 32 to 355 (REVKLLLLGA…KNNLKDCGLF (324 aa)) form the G-alpha domain. The G1 motif stretch occupies residues 35–48 (KLLLLGAGESGKST). GTP is bound by residues 40-47 (GAGESGKS), 176-182 (LRTRVKT), 201-205 (DVGGQ), 270-273 (NKKD), and Ala327. Residue Ser47 participates in Mg(2+) binding. Residues 174–182 (DVLRTRVKT) form a G2 motif region. Residue Arg179 is modified to ADP-ribosylarginine; by cholera toxin. A Mg(2+)-binding site is contributed by Thr182. The interval 197–206 (FKMFDVGGQR) is G3 motif. A Deamidated glutamine; by Photorhabdus PAU_02230 modification is found at Gln205. The interval 266 to 273 (ILFLNKKD) is G4 motif. A G5 motif region spans residues 325-330 (TCATDT). Cys352 is modified (ADP-ribosylcysteine; by pertussis toxin).

Belongs to the G-alpha family. G(i/o/t/z) subfamily. As to quaternary structure, g proteins are composed of 3 units; alpha, beta and gamma. The alpha chain contains the guanine nucleotide binding site. In this context, interacts with GNB2. Interacts with GPSM1. Interacts with RGS12 and RGS14. Interacts with UNC5B. Interacts (inactive GDP-bound form) with NUCB1 (via GBA motif); the interaction leads to activation of GNAI3. Interacts (inactive GDP-bound form) with CCDC88C/DAPLE (via GBA motif). Interacts (inactive GDP-bound form) with CCDC8A/GIV (via GBA motif). Interacts with CXCR1 and CXCR2. In terms of processing, (Microbial infection) Deamidated at Gln-205 by Photorhabdus asymbiotica toxin PAU_02230, blocking GTP hydrolysis of heterotrimeric GNAQ or GNA11 and G-alphai (GNAI1, GNAI2 or GNAI3) proteins, thereby activating RhoA.

The protein localises to the cytoplasm. Its subcellular location is the cytoskeleton. It localises to the microtubule organizing center. The protein resides in the centrosome. It is found in the cell membrane. The protein localises to the membrane. In terms of biological role, guanine nucleotide-binding proteins (G proteins) are involved as modulators or transducers in various transmembrane signaling systems. The G(i) proteins are involved in hormonal regulation of adenylate cyclase: they inhibit the cyclase in response to beta-adrenergic stimuli. May play a role in cell division. Regulates the cell surface density of dopamine receptors DRD2 by sequestrating them as an intracellular pool. This Homo sapiens (Human) protein is Guanine nucleotide-binding protein G(i) subunit alpha-2 (GNAI2).